The primary structure comprises 103 residues: Large ribosomal subunit protein bL21 (103 aa).

This sequence belongs to the bacterial ribosomal protein bL21 family. As to quaternary structure, part of the 50S ribosomal subunit. Contacts protein L20.

Functionally, this protein binds to 23S rRNA in the presence of protein L20. The protein is Large ribosomal subunit protein bL21 of Bordetella parapertussis (strain 12822 / ATCC BAA-587 / NCTC 13253).